The sequence spans 337 residues: 2-oxoglutarate receptor 1 (337 aa).

Topologically, residues 1-34 (MNEPLDYLANASDFPDYAAAFGNCTDENIPLKMH) are extracellular. Asn10 and Asn23 each carry an N-linked (GlcNAc...) asparagine glycan. A helical transmembrane segment spans residues 35-55 (YLPVIYGIIFLVGFPGNAVVI). The Cytoplasmic segment spans residues 56 to 69 (STYIFKMRPWKSST). The helical transmembrane segment at 70–90 (IIMLNLACTDLLYLTSLPFLI) threads the bilayer. The Extracellular portion of the chain corresponds to 91-116 (HYYASGENWIFGDFMCKFIRFSFHFN). A disulfide bond links Cys106 and Cys183. A helical transmembrane segment spans residues 117–137 (LYSSILFLTCFSIFRYCVIIH). The Cytoplasmic portion of the chain corresponds to 138–151 (PMSCFSIHKTRCAV). The chain crosses the membrane as a helical span at residues 152–172 (VACAVVWIISLVAVIPMTFLI). The Extracellular segment spans residues 173-201 (TSTNRTNRSACLDLTSSDELNTIKWYNLI). N-linked (GlcNAc...) asparagine glycosylation is found at Asn176 and Asn179. The chain crosses the membrane as a helical span at residues 202–222 (LTATTFCLPLVIVTLCYTTII). At 223 to 242 (HTLTHGLQTDSCLKQKARRL) the chain is on the cytoplasmic side. Residues 243 to 263 (TILLLLAFYVCFLPFHILRVI) form a helical membrane-spanning segment. Over 264–284 (RIESRLLSISCSIENQIHEAY) the chain is Extracellular. Residues 285 to 305 (IVSRPLAALNTFGNLLLYVVV) traverse the membrane as a helical segment. The Cytoplasmic segment spans residues 306-337 (SDNFQQAVCSTVRCKVSGNLEQAKKISYSNNP).

Belongs to the G-protein coupled receptor 1 family. In terms of tissue distribution, detected in kidney and, to a lower extent, in placenta. Not detected in brain tissues including the frontal cortex, caudate putamen, thalamus, hypothalamus, hippocampus or pons.

It localises to the cell membrane. In terms of biological role, g protein-coupled receptor for dicarboxylates and amino dicarboxylates. Receptor for itaconate, a metabolite produced by myeloid lineages. In the respiratory epithelium, couples the binding of itaconate to the activation of GNA11 and downstream intracellular Ca(2+) release, leading to mucocilliary clearance of airborne pathogens. Receptor for leukotriene E4 (LTE4) produced by mast cells upon allergic inflammation. Binds with high affinity to LTE4 and elicits mucin release from pulmonary epithelium in response to airborne fungi allergens. Regulates mucin-producing goblet cell homeostasis. Receptor for alpha-ketoglutarate produced by proximal tubule renal cells upon metabolic alkalosis. In an intrarenal paracrine signaling pathway, binds alpha-ketoglutarate and drives transepithelial salt reabsorption and bicarbonate secretion by SLC26A4/pendrin-positive intercalated cells. The sequence is that of 2-oxoglutarate receptor 1 (OXGR1) from Homo sapiens (Human).